Here is a 295-residue protein sequence, read N- to C-terminus: Formamidopyrimidine-DNA glycosylase (295 aa).

Pro2 serves as the catalytic Schiff-base intermediate with DNA. The active-site Proton donor is the Glu3. Lys61 (proton donor; for beta-elimination activity) is an active-site residue. DNA contacts are provided by His95, Arg117, and Arg159. Residues 245 to 279 form an FPG-type zinc finger; the sequence is HAYGREGEACERCGTPIRRVAFMNRSSYFCPVCQP. Arg269 (proton donor; for delta-elimination activity) is an active-site residue.

It belongs to the FPG family. Monomer. The cofactor is Zn(2+).

It catalyses the reaction Hydrolysis of DNA containing ring-opened 7-methylguanine residues, releasing 2,6-diamino-4-hydroxy-5-(N-methyl)formamidopyrimidine.. The enzyme catalyses 2'-deoxyribonucleotide-(2'-deoxyribose 5'-phosphate)-2'-deoxyribonucleotide-DNA = a 3'-end 2'-deoxyribonucleotide-(2,3-dehydro-2,3-deoxyribose 5'-phosphate)-DNA + a 5'-end 5'-phospho-2'-deoxyribonucleoside-DNA + H(+). In terms of biological role, involved in base excision repair of DNA damaged by oxidation or by mutagenic agents. Acts as a DNA glycosylase that recognizes and removes damaged bases. Has a preference for oxidized purines, such as 7,8-dihydro-8-oxoguanine (8-oxoG). Has AP (apurinic/apyrimidinic) lyase activity and introduces nicks in the DNA strand. Cleaves the DNA backbone by beta-delta elimination to generate a single-strand break at the site of the removed base with both 3'- and 5'-phosphates. This Nocardioides sp. (strain ATCC BAA-499 / JS614) protein is Formamidopyrimidine-DNA glycosylase.